Consider the following 402-residue polypeptide: Diaminopimelate decarboxylase (402 aa).

An N6-(pyridoxal phosphate)lysine modification is found at K45. Residues G224 and E259–R262 contribute to the pyridoxal 5'-phosphate site. Residues R262, R298, and Y302 each contribute to the substrate site. Catalysis depends on C327, which acts as the Proton donor. Positions 328 and 356 each coordinate substrate. Y356 is a binding site for pyridoxal 5'-phosphate.

It belongs to the Orn/Lys/Arg decarboxylase class-II family. LysA subfamily. As to quaternary structure, homodimer. Requires pyridoxal 5'-phosphate as cofactor.

The enzyme catalyses meso-2,6-diaminopimelate + H(+) = L-lysine + CO2. The protein operates within amino-acid biosynthesis; L-lysine biosynthesis via DAP pathway; L-lysine from DL-2,6-diaminopimelate: step 1/1. Specifically catalyzes the decarboxylation of meso-diaminopimelate (meso-DAP) to L-lysine. The chain is Diaminopimelate decarboxylase from Campylobacter jejuni subsp. jejuni serotype O:2 (strain ATCC 700819 / NCTC 11168).